The following is a 1021-amino-acid chain: Nonribosomal peptide synthetase asaC (1021 aa).

The adenylation (A) domain stretch occupies residues 17-418 (RHHVRTSPNA…ARADNMVKIR (402 aa)). The Carrier domain occupies 528-603 (KDAGDSVTWL…GLASVIDAGH (76 aa)). The residue at position 563 (serine 563) is an O-(pantetheine 4'-phosphoryl)serine. The tract at residues 646–888 (LTGATGFLGT…MIPVDFITTA (243 aa)) is short-chain dehydrogenase/reductase (R) domain.

Belongs to the NRP synthetase family.

The protein operates within secondary metabolite biosynthesis. Its function is as follows. Nonribosomal peptide synthetase; part of the gene cluster that mediates the biosynthesis of aspergillic acid, a hydroxamic acid-containing pyrazinone with aliphatic side chains that originates from leucine (Leu) and isoleucine (Ile). Aspergillic acid has antibiotic properties and was shown to be lethal to mice. The first step in the pathway is the production of deoxyaspergillic acid via a condensation between the Ile amine and the Leu carboxylic acid, followed by a reductive release from the protein forming the dipeptide aldehyde NH(2)-Leu-Ile-CHO, which could undergo an intermolecular cyclization resulting in a dihydropyrazinone. As the NRPS asaC lacks a condensation domain, it is improbable that it is responsible for condensation of Leu and Ile. One possibility is that asaC acts on a previously condensed dipeptide and functions as a Leu-Ile reductase to yield deoxyaspergillic acid. After asaC forms deoxyaspergillic acid, the cytochrome P450 asaD oxidizes the pyrazinone to the hydroxamic acid-containing bioactive metabolite aspergillic acid. The hydroxylase/desaturase asaB can then convert aspergillic acid to hydroxyaspergillic acid. Both aspergillic acid and hydroxyaspergillic acid can form complexes with iron producing ferriaspergillin analogs. The sequence is that of Nonribosomal peptide synthetase asaC from Aspergillus flavus (strain ATCC 200026 / FGSC A1120 / IAM 13836 / NRRL 3357 / JCM 12722 / SRRC 167).